Consider the following 1050-residue polypeptide: Isoleucine--tRNA ligase (1050 aa).

A 'HIGH' region motif is present at residues 45–56; it reads PYPSSPIPHIGT. Positions 594-598 match the 'KMSKS' region motif; sequence EMHKS. Lys-597 is an ATP binding site.

It belongs to the class-I aminoacyl-tRNA synthetase family. IleS type 2 subfamily. As to quaternary structure, monomer. Requires Zn(2+) as cofactor.

Its subcellular location is the cytoplasm. The catalysed reaction is tRNA(Ile) + L-isoleucine + ATP = L-isoleucyl-tRNA(Ile) + AMP + diphosphate. Its function is as follows. Catalyzes the attachment of isoleucine to tRNA(Ile). As IleRS can inadvertently accommodate and process structurally similar amino acids such as valine, to avoid such errors it has two additional distinct tRNA(Ile)-dependent editing activities. One activity is designated as 'pretransfer' editing and involves the hydrolysis of activated Val-AMP. The other activity is designated 'posttransfer' editing and involves deacylation of mischarged Val-tRNA(Ile). The chain is Isoleucine--tRNA ligase from Sulfolobus acidocaldarius (strain ATCC 33909 / DSM 639 / JCM 8929 / NBRC 15157 / NCIMB 11770).